The following is a 99-amino-acid chain: PE family immunomodulator PE35 (99 aa).

Residues M1–D90 form the PE domain.

The protein belongs to the mycobacterial PE family. Interacts with PPE68. PE35/PPE68 complex interacts with human TLR2.

It localises to the secreted. The protein localises to the cell surface. Functionally, plays a major role in RD1-associated pathogenesis, and may contribute to the establishment and maintenance of M.tuberculosis infection. Together with PPE68, stimulates the secretion of IL-10 and MCP-1 from human macrophages, via the interaction with human Toll-like receptor 2 (TLR2). In Mycobacterium tuberculosis (strain ATCC 25618 / H37Rv), this protein is PE family immunomodulator PE35 (PE35).